A 161-amino-acid chain; its full sequence is Phosphopantetheine adenylyltransferase (161 aa).

Threonine 9 contributes to the substrate binding site. Residues 9 to 10 (TF) and histidine 17 each bind ATP. Substrate is bound by residues lysine 41, leucine 73, and arginine 87. ATP contacts are provided by residues 88 to 90 (GLR), glutamate 98, and 123 to 129 (LSYISST).

The protein belongs to the bacterial CoaD family. As to quaternary structure, homohexamer. It depends on Mg(2+) as a cofactor.

The protein resides in the cytoplasm. It catalyses the reaction (R)-4'-phosphopantetheine + ATP + H(+) = 3'-dephospho-CoA + diphosphate. The protein operates within cofactor biosynthesis; coenzyme A biosynthesis; CoA from (R)-pantothenate: step 4/5. Its function is as follows. Reversibly transfers an adenylyl group from ATP to 4'-phosphopantetheine, yielding dephospho-CoA (dPCoA) and pyrophosphate. This is Phosphopantetheine adenylyltransferase from Hahella chejuensis (strain KCTC 2396).